A 388-amino-acid polypeptide reads, in one-letter code: Riboflavin biosynthesis protein RibBA (388 aa).

Residues 1–186 (MEELREAFEE…MDDVWREFVK (186 aa)) form a DHBP synthase region. D-ribulose 5-phosphate-binding positions include 21 to 22 (RE), Asp-26, 125 to 129 (RKGHT), and Glu-149. Position 22 (Glu-22) interacts with Mg(2+). Residue His-128 coordinates Mg(2+). The interval 187–388 (RKLLMKKKAE…LEEIFREVNS (202 aa)) is GTP cyclohydrolase II. 235-239 (RIHSE) is a GTP binding site. Residues Cys-240, Cys-251, and Cys-253 each coordinate Zn(2+). GTP-binding positions include Gln-256, 277–279 (EGR), and Thr-299. The active-site Proton acceptor; for GTP cyclohydrolase activity is Asp-311. The active-site Nucleophile; for GTP cyclohydrolase activity is the Arg-313. The GTP site is built by Thr-334 and Lys-339.

The protein in the N-terminal section; belongs to the DHBP synthase family. This sequence in the C-terminal section; belongs to the GTP cyclohydrolase II family. Requires Mg(2+) as cofactor. The cofactor is Mn(2+). Zn(2+) is required as a cofactor.

It catalyses the reaction D-ribulose 5-phosphate = (2S)-2-hydroxy-3-oxobutyl phosphate + formate + H(+). The enzyme catalyses GTP + 4 H2O = 2,5-diamino-6-hydroxy-4-(5-phosphoribosylamino)-pyrimidine + formate + 2 phosphate + 3 H(+). It participates in cofactor biosynthesis; riboflavin biosynthesis; 2-hydroxy-3-oxobutyl phosphate from D-ribulose 5-phosphate: step 1/1. Its pathway is cofactor biosynthesis; riboflavin biosynthesis; 5-amino-6-(D-ribitylamino)uracil from GTP: step 1/4. Its function is as follows. Catalyzes the conversion of D-ribulose 5-phosphate to formate and 3,4-dihydroxy-2-butanone 4-phosphate. In terms of biological role, catalyzes the conversion of GTP to 2,5-diamino-6-ribosylamino-4(3H)-pyrimidinone 5'-phosphate (DARP), formate and pyrophosphate. This Thermotoga maritima (strain ATCC 43589 / DSM 3109 / JCM 10099 / NBRC 100826 / MSB8) protein is Riboflavin biosynthesis protein RibBA.